The sequence spans 44 residues: Large ribosomal subunit protein bL34 (44 aa).

It belongs to the bacterial ribosomal protein bL34 family.

The polypeptide is Large ribosomal subunit protein bL34 (Wolbachia sp. subsp. Brugia malayi (strain TRS)).